A 283-amino-acid polypeptide reads, in one-letter code: Succinate dehydrogenase [ubiquinone] iron-sulfur subunit, mitochondrial (283 aa).

Residues 66–145 (KKPTLQTYSI…PVKIYPLPHM (80 aa)) enclose the 2Fe-2S ferredoxin-type domain. [2Fe-2S] cluster contacts are provided by cysteine 105, cysteine 110, cysteine 113, and cysteine 125. A 4Fe-4S ferredoxin-type domain is found at 186–216 (DRKKLDGMYECILCACCSTSCPSYWWNQDEY). Residues cysteine 196, cysteine 199, and cysteine 202 each coordinate [4Fe-4S] cluster. A [3Fe-4S] cluster-binding site is contributed by cysteine 206. A ubiquinone is bound at residue tryptophan 211. The [3Fe-4S] cluster site is built by cysteine 253 and cysteine 259. Residue cysteine 263 coordinates [4Fe-4S] cluster.

It belongs to the succinate dehydrogenase/fumarate reductase iron-sulfur protein family. As to quaternary structure, component of complex II composed of four subunits: a flavoprotein (FP), an iron-sulfur protein (IP), and a cytochrome b composed of a large and a small subunit. Requires [2Fe-2S] cluster as cofactor. [3Fe-4S] cluster serves as cofactor. It depends on [4Fe-4S] cluster as a cofactor.

The protein localises to the mitochondrion inner membrane. It catalyses the reaction a quinone + succinate = fumarate + a quinol. It participates in carbohydrate metabolism; tricarboxylic acid cycle; fumarate from succinate (eukaryal route): step 1/1. Iron-sulfur protein (IP) subunit of succinate dehydrogenase (SDH) that is involved in complex II of the mitochondrial electron transport chain and is responsible for transferring electrons from succinate to ubiquinone (coenzyme Q). This chain is Succinate dehydrogenase [ubiquinone] iron-sulfur subunit, mitochondrial (SDH2), found in Uromyces fabae (Rust fungus).